The primary structure comprises 512 residues: FAD-dependent monooxygenase prx3 (512 aa).

A signal peptide spans 1 to 19 (MLSLKAFLALSLSIHLSQG). The FAD-binding PCMH-type domain maps to 63–235 (CQTTPTCVFA…TRFDLATFSV (173 aa)). His100 is subject to Pros-8alpha-FAD histidine. N-linked (GlcNAc...) asparagine glycans are attached at residues Asn197, Asn281, Asn307, Asn329, Asn361, and Asn477.

The protein belongs to the oxygen-dependent FAD-linked oxidoreductase family.

It functions in the pathway sesquiterpene biosynthesis. Functionally, FAD-dependent monooxygenase; part of the gene cluster that mediates the biosynthesis of PR-toxin, a bicyclic sesquiterpene belonging to the eremophilane class and acting as a mycotoxin. The first step of the pathway is catalyzed by the aristolochene synthase which performs the cyclization of trans,trans-farnesyl diphosphate (FPP) to the bicyclic sesquiterpene aristolochene. Following the formation of aristolochene, the non-oxygenated aristolochene is converted to the trioxygenated intermediate eremofortin B, via 7-epi-neopetasone. This conversion appears to involve three enzymes, a hydroxysterol oxidase-like enzyme, the quinone-oxidase prx3 that forms the quinone-type-structure in the bicyclic nucleus of aristolochene with the C8-oxo group and the C-3 hydroxyl group, and the P450 monooxygenase ORF6 that introduces the epoxide at the double bond between carbons 1 and 2. No monoxy or dioxy-intermediates have been reported to be released to the broth, so these three early oxidative reactions may be coupled together. Eremofortin B is further oxidized by another P450 monooxygenase, that introduces a second epoxide between carbons 7 and 11 prior to acetylation to eremofortin A by the acetyltransferase ORF8. The second epoxidation may be performed by a second P450 monooxygenase. After the acetylation step, eremofortin A is converted to eremofortin C and then to PR-toxin. First the conversion of eremofortin A to eremofortin C proceeds by oxidation of the side chain of the molecule at C-12 and is catalyzed by the short-chain oxidoreductase prx1. The cytochrome P450 monooxygenase ORF6 is probably also involved in this step. The primary alcohol formed at C-12 is finally oxidized by the short-chain alcohol dehydrogenase prx4 that forms PR-toxin. The polypeptide is FAD-dependent monooxygenase prx3 (Penicillium roqueforti (strain FM164)).